Reading from the N-terminus, the 464-residue chain is MHGSGSLLACLLPPLLLLGAAPGPAGALSEEEKHVMVELHNLYRTQVSPPATNMLQMRWDEELAAFAKAYAQQCVWGHNKERGRRGENLFAITGEGLDVPLAMEEWHHEREHYNLSAISCAAGQMCGHYTQVVWAKTERIGCGSHFCEKLQGVEETNIHLLVCNYEPPGNVKGQRPYQEGTPCSQCPLGYHCKNSLCEPIRGPEEAQDLSSLVPEAPSSLATEASSSRREGIDSSLATEPPPFLVTEVSGSLATKVLSSVETKAPSSLVTEDSPSMATKTPLSLATKVPSVLATHSLLSLDKRPATLLPKSTHDPIPKSADKEASSTRMPSRIPESSLHPKISLMGTREPLPLSQEEGEAEAELAHCSEILASVFPAQEKPGELQTTLKHKGHSSSKSLSNSPSASATANAVGGRTLALQSSLPDAEGPGKHGFRSGSNASPGHVGGLLLGLLLLLPLVLAGIF.

An N-terminal signal peptide occupies residues 1–27; that stretch reads MHGSGSLLACLLPPLLLLGAAPGPAGA. The 129-residue stretch at 37–165 folds into the SCP domain; it reads VELHNLYRTQ…TNIHLLVCNY (129 aa). A glycan (N-linked (GlcNAc...) asparagine) is linked at N114. 4 disordered regions span residues 208–241, 260–281, 304–347, and 386–412; these read DLSSLVPEAPSSLATEASSSRREGIDSSLATEPP, VETKAPSSLVTEDSPSMATKTP, PATL…LMGT, and TTLKHKGHSSSKSLSNSPSASATANAV. Residues 311-325 are compositionally biased toward basic and acidic residues; the sequence is STHDPIPKSADKEAS. Low complexity predominate over residues 395–411; the sequence is SSKSLSNSPSASATANA.

This sequence belongs to the CRISP family. As to quaternary structure, interacts with PSP94/MSMB. Post-translationally, N-glycosylated.

The protein resides in the secreted. Functionally, may inhibit cardiomyocyte growth. In Bos taurus (Bovine), this protein is Peptidase inhibitor 16 (PI16).